Here is a 103-residue protein sequence, read N- to C-terminus: Small ribosomal subunit protein uS10 (103 aa).

This sequence belongs to the universal ribosomal protein uS10 family. Part of the 30S ribosomal subunit.

Involved in the binding of tRNA to the ribosomes. This chain is Small ribosomal subunit protein uS10, found in Shewanella frigidimarina (strain NCIMB 400).